The sequence spans 424 residues: Enolase (424 aa).

Gln163 serves as a coordination point for (2R)-2-phosphoglycerate. The active-site Proton donor is Glu205. Positions 242, 285, and 312 each coordinate Mg(2+). (2R)-2-phosphoglycerate-binding residues include Lys337, Arg366, Ser367, and Lys388. Lys337 (proton acceptor) is an active-site residue.

The protein belongs to the enolase family. It depends on Mg(2+) as a cofactor.

It is found in the cytoplasm. The protein resides in the secreted. The protein localises to the cell surface. The enzyme catalyses (2R)-2-phosphoglycerate = phosphoenolpyruvate + H2O. The protein operates within carbohydrate degradation; glycolysis; pyruvate from D-glyceraldehyde 3-phosphate: step 4/5. Its function is as follows. Catalyzes the reversible conversion of 2-phosphoglycerate (2-PG) into phosphoenolpyruvate (PEP). It is essential for the degradation of carbohydrates via glycolysis. The sequence is that of Enolase from Roseobacter denitrificans (strain ATCC 33942 / OCh 114) (Erythrobacter sp. (strain OCh 114)).